Consider the following 200-residue polypeptide: UPF0301 protein Veis_1517 (200 aa).

It belongs to the UPF0301 (AlgH) family.

This is UPF0301 protein Veis_1517 from Verminephrobacter eiseniae (strain EF01-2).